A 917-amino-acid chain; its full sequence is Chitin synthase 1 (917 aa).

Positions 1-11 (MAYHGRGDGYD) are enriched in basic and acidic residues. Residues 1–56 (MAYHGRGDGYDGHQLQDLPGGHNQGDQHDDAQAPFLSENPMPYDNDRLGTDTPPVR) form a disordered region. Topologically, residues 1 to 570 (MAYHGRGDGY…YKSGHNIVRM (570 aa)) are extracellular. N544 carries N-linked (GlcNAc...) asparagine glycosylation. Residues 571–591 (FFFHVQLIYNIANVIFTWFSL) form a helical membrane-spanning segment. Residues 592 to 629 (ASYWLTTTVIMDLVGTPVTASSSSAEHHGWPFGDTVTP) are Cytoplasmic-facing. The chain crosses the membrane as a helical span at residues 630–650 (FFNAVLKYIYLAFVILQFILA). The Extracellular portion of the chain corresponds to 651 to 664 (LGNRPKGSKWTYIT). The chain crosses the membrane as a helical span at residues 665–685 (SFFVFSLIQSYILVLSGYLVA). The Cytoplasmic segment spans residues 686–716 (RAFSVPLDQQLQLDNAKDAMASLFGGSGSAG). Residues 717–737 (VILVALVTIYGLYFLASFMYL) traverse the membrane as a helical segment. Residues 738-744 (DPWHMFH) lie on the Extracellular side of the membrane. A helical membrane pass occupies residues 745 to 765 (SFPYYMLLMSTYINILMIYAF). Residues 766-843 (NNWHDVSWGT…DLEDSYKSFR (78 aa)) are Cytoplasmic-facing. A helical membrane pass occupies residues 844–864 (TMLVVSWLFSNCLLAVVITSD). The Extracellular segment spans residues 865-884 (NFNTFGIGQTASARTAWFFK). Residues 885–905 (FLLFATGALSVIRFIGFCWFL) form a helical membrane-spanning segment. Topologically, residues 906–917 (GRTGIMCCFARR) are cytoplasmic.

This sequence belongs to the chitin synthase family. Class III subfamily.

The protein localises to the cell membrane. It carries out the reaction [(1-&gt;4)-N-acetyl-beta-D-glucosaminyl](n) + UDP-N-acetyl-alpha-D-glucosamine = [(1-&gt;4)-N-acetyl-beta-D-glucosaminyl](n+1) + UDP + H(+). In terms of biological role, polymerizes chitin, a structural polymer of the cell wall and septum, by transferring the sugar moiety of UDP-GlcNAc to the non-reducing end of the growing chitin polymer. The sequence is that of Chitin synthase 1 (chs-1) from Neurospora crassa (strain ATCC 24698 / 74-OR23-1A / CBS 708.71 / DSM 1257 / FGSC 987).